The chain runs to 760 residues: Sphingosine kinase B (760 aa).

The tract at residues 1-108 is disordered; sequence MENNNNEPAE…NNNNNEPVTS (108 aa). Over residues 12-39 the composition is skewed to basic and acidic residues; sequence VQEKGPKLKNDIDLNDQFKDEKEKKEEI. A compositionally biased stretch (low complexity) spans 40–106; that stretch reads SSSSIENKNN…NNNNNNNEPV (67 aa). The DAGKc domain maps to 247 to 383; sequence PKNRKIRILI…LDVCIVQQPT (137 aa). ATP-binding positions include 257 to 259 and Thr-288; that span reads NPK. 313-316 is a substrate binding site; it reads SGDG. Asp-315 serves as the catalytic Proton donor/acceptor. ATP-binding positions include Glu-320 and 345-347; that span reads GTG. Positions 394–438 are disordered; that stretch reads TVTTTTTTTSPTSASPTITSANNNNNNNNNNNNNNNNNNNNNNNN. Residue Asp-461 participates in substrate binding. Residues Arg-468 and Arg-474 each coordinate ATP. The segment at 535–605 is disordered; the sequence is DNDNNNKNKN…SSPRSDINMS (71 aa). The span at 549–597 shows a compositional bias: low complexity; it reads EINSTTSNNNNNNNTTTTSTSSSTSTSTSTSSLTATTTTAKSTNSLSSS. 734 to 736 provides a ligand contact to ATP; that stretch reads DGE.

The catalysed reaction is a sphingoid base + ATP = a sphingoid 1-phosphate + ADP + H(+). Its activity is regulated as follows. Inhibited by N,N,-dimethylsphingosine. In terms of biological role, catalyzes the phosphorylation of sphingosine to form sphingosine-1-phosphate (S1P), which probably acts intracellularly as a second messenger perhaps by promoting cell proliferation. The polypeptide is Sphingosine kinase B (sgkB) (Dictyostelium discoideum (Social amoeba)).